A 472-amino-acid polypeptide reads, in one-letter code: 3-isopropylmalate dehydratase large subunit (472 aa).

[4Fe-4S] cluster is bound by residues cysteine 349, cysteine 409, and cysteine 412.

This sequence belongs to the aconitase/IPM isomerase family. LeuC type 1 subfamily. Heterodimer of LeuC and LeuD. The cofactor is [4Fe-4S] cluster.

It catalyses the reaction (2R,3S)-3-isopropylmalate = (2S)-2-isopropylmalate. The protein operates within amino-acid biosynthesis; L-leucine biosynthesis; L-leucine from 3-methyl-2-oxobutanoate: step 2/4. Its function is as follows. Catalyzes the isomerization between 2-isopropylmalate and 3-isopropylmalate, via the formation of 2-isopropylmaleate. In Rhodospirillum rubrum (strain ATCC 11170 / ATH 1.1.1 / DSM 467 / LMG 4362 / NCIMB 8255 / S1), this protein is 3-isopropylmalate dehydratase large subunit.